We begin with the raw amino-acid sequence, 297 residues long: Ribosomal RNA small subunit methyltransferase H (297 aa).

Residues 37-39 (GGH), Glu56, Phe87, Asp102, and His109 each bind S-adenosyl-L-methionine.

This sequence belongs to the methyltransferase superfamily. RsmH family.

The protein localises to the cytoplasm. The enzyme catalyses cytidine(1402) in 16S rRNA + S-adenosyl-L-methionine = N(4)-methylcytidine(1402) in 16S rRNA + S-adenosyl-L-homocysteine + H(+). In terms of biological role, specifically methylates the N4 position of cytidine in position 1402 (C1402) of 16S rRNA. This is Ribosomal RNA small subunit methyltransferase H from Borrelia hermsii (strain HS1 / DAH).